Here is a 270-residue protein sequence, read N- to C-terminus: Putative F-box protein At3g24700 (270 aa).

The 45-residue stretch at 1-45 folds into the F-box domain; sequence MLTDLPLDLESEILSRVPATSLQRLKTTCKRWYALFRDPRFVKKN.

In Arabidopsis thaliana (Mouse-ear cress), this protein is Putative F-box protein At3g24700.